The chain runs to 477 residues: Cysteine--tRNA ligase (477 aa).

Cysteine 29 contributes to the Zn(2+) binding site. The 'HIGH' region signature appears at 31–41 (PTVQASPHIGH). The Zn(2+) site is built by cysteine 219, histidine 244, and glutamate 248. The 'KMSKS' region signature appears at 275–279 (KMSKS). ATP is bound at residue lysine 278.

This sequence belongs to the class-I aminoacyl-tRNA synthetase family. As to quaternary structure, monomer. The cofactor is Zn(2+).

It localises to the cytoplasm. It catalyses the reaction tRNA(Cys) + L-cysteine + ATP = L-cysteinyl-tRNA(Cys) + AMP + diphosphate. In Leifsonia xyli subsp. xyli (strain CTCB07), this protein is Cysteine--tRNA ligase.